A 199-amino-acid chain; its full sequence is Probable GTP-binding protein EngB (199 aa).

In terms of domain architecture, EngB-type G spans 21–196 (TKPEYAFIGR…LTYIDEINKQ (176 aa)). GTP-binding positions include 29 to 36 (GRSNVGKS), 56 to 60 (GKTQL), 74 to 77 (DLPG), 141 to 144 (TKID), and 175 to 177 (TSS). Mg(2+) is bound by residues serine 36 and threonine 58.

It belongs to the TRAFAC class TrmE-Era-EngA-EngB-Septin-like GTPase superfamily. EngB GTPase family. The cofactor is Mg(2+).

In terms of biological role, necessary for normal cell division and for the maintenance of normal septation. The sequence is that of Probable GTP-binding protein EngB from Cytophaga hutchinsonii (strain ATCC 33406 / DSM 1761 / CIP 103989 / NBRC 15051 / NCIMB 9469 / D465).